Reading from the N-terminus, the 324-residue chain is tRNA uridine(34) hydroxylase (324 aa).

A Rhodanese domain is found at 127 to 221 (QQEETIVIDA…YGKDPEVQGE (95 aa)). Cys-181 functions as the Cysteine persulfide intermediate in the catalytic mechanism.

Belongs to the TrhO family.

The catalysed reaction is uridine(34) in tRNA + AH2 + O2 = 5-hydroxyuridine(34) in tRNA + A + H2O. In terms of biological role, catalyzes oxygen-dependent 5-hydroxyuridine (ho5U) modification at position 34 in tRNAs. The chain is tRNA uridine(34) hydroxylase from Bacillus cytotoxicus (strain DSM 22905 / CIP 110041 / 391-98 / NVH 391-98).